The chain runs to 650 residues: DNA mismatch repair protein MutL (650 aa).

Disordered stretches follow at residues 358–392 (EASQAALPVTPQPRPALTPGHPDPPPQAQLQQPLV) and 408–448 (QPRP…QSAA). Over residues 367 to 384 (TPQPRPALTPGHPDPPPQ) the composition is skewed to pro residues. Residues 430–444 (PYAPIAAAPVPASEP) show a composition bias toward low complexity.

This sequence belongs to the DNA mismatch repair MutL/HexB family.

In terms of biological role, this protein is involved in the repair of mismatches in DNA. It is required for dam-dependent methyl-directed DNA mismatch repair. May act as a 'molecular matchmaker', a protein that promotes the formation of a stable complex between two or more DNA-binding proteins in an ATP-dependent manner without itself being part of a final effector complex. In Geobacter sp. (strain M21), this protein is DNA mismatch repair protein MutL.